We begin with the raw amino-acid sequence, 171 residues long: S-ribosylhomocysteine lyase (171 aa).

Residues His-54, His-58, and Cys-128 each contribute to the Fe cation site.

Belongs to the LuxS family. Homodimer. It depends on Fe cation as a cofactor.

It carries out the reaction S-(5-deoxy-D-ribos-5-yl)-L-homocysteine = (S)-4,5-dihydroxypentane-2,3-dione + L-homocysteine. Involved in the synthesis of autoinducer 2 (AI-2) which is secreted by bacteria and is used to communicate both the cell density and the metabolic potential of the environment. The regulation of gene expression in response to changes in cell density is called quorum sensing. Catalyzes the transformation of S-ribosylhomocysteine (RHC) to homocysteine (HC) and 4,5-dihydroxy-2,3-pentadione (DPD). This chain is S-ribosylhomocysteine lyase, found in Enterobacter sp. (strain 638).